Here is a 75-residue protein sequence, read N- to C-terminus: Translation initiation factor IF-1 1 (75 aa).

The S1-like domain maps to 1-74 (MARSDMIEVD…TRGRIVYRYR (74 aa)).

The protein belongs to the IF-1 family. In terms of assembly, component of the 30S ribosomal translation pre-initiation complex which assembles on the 30S ribosome in the order IF-2 and IF-3, IF-1 and N-formylmethionyl-tRNA(fMet); mRNA recruitment can occur at any time during PIC assembly.

It is found in the cytoplasm. Its function is as follows. One of the essential components for the initiation of protein synthesis. Stabilizes the binding of IF-2 and IF-3 on the 30S subunit to which N-formylmethionyl-tRNA(fMet) subsequently binds. Helps modulate mRNA selection, yielding the 30S pre-initiation complex (PIC). Upon addition of the 50S ribosomal subunit IF-1, IF-2 and IF-3 are released leaving the mature 70S translation initiation complex. The protein is Translation initiation factor IF-1 1 of Symbiobacterium thermophilum (strain DSM 24528 / JCM 14929 / IAM 14863 / T).